The sequence spans 178 residues: Caveolin-1 (178 aa).

An N-acetylserine modification is found at Ser-2. Ser-2 is modified (phosphoserine). The tract at residues 2 to 94 is required for homooligomerization; it reads SGGKYVDSEG…WKASFTTFTV (93 aa). At 2–104 the chain is on the cytoplasmic side; that stretch reads SGGKYVDSEG…TKYWFYRLLS (103 aa). Lys-5 is subject to N6-acetyllysine; alternate. Lys-5 is covalently cross-linked (Glycyl lysine isopeptide (Lys-Gly) (interchain with G-Cter in ubiquitin); alternate). Tyr-6 carries the post-translational modification Phosphotyrosine. Phosphoserine is present on Ser-9. Position 14 is a phosphotyrosine; by ABL1 (Tyr-14). Position 25 is a phosphotyrosine (Tyr-25). Residues Lys-26, Lys-30, Lys-39, Lys-47, and Lys-57 each participate in a glycyl lysine isopeptide (Lys-Gly) (interchain with G-Cter in ubiquitin) cross-link. The tract at residues 82 to 94 is interaction with CAVIN3; that stretch reads DGIWKASFTTFTV. The helical intramembrane region spans 105–125; that stretch reads ALFGIPMALIWGIYFAILSFL. Residues 126–178 are Cytoplasmic-facing; that stretch reads HIWAVVPCIKSFLIEIQCISRVYSIYVHTFCDPLFEAIGKIFSNIRINMQKEI. The interval 131–142 is interacts with SPRY1, SPRY2, SPRY3 and SPRY4; it reads VPCIKSFLIEIQ. Residues Cys-133, Cys-143, and Cys-156 are each lipidated (S-palmitoyl cysteine). An interacts with SPRY1, SPRY2, and SPRY4 region spans residues 149 to 160; the sequence is SIYVHTFCDPLF. Positions 167–178 are interacts with SPRY1, SPRY2, SPRY3 and SPRY4; that stretch reads FSNIRINMQKEI.

The protein belongs to the caveolin family. Homooligomer. Interacts (via the N-terminus) with DPP4; the interaction is direct. Forms a stable heterooligomeric complex with CAV2 that targets to lipid rafts and drives caveolae formation. Interacts with PACSIN2; this interaction induces membrane tubulation. Interacts with BMX, BTK, CTNNB1, CDH1, GLIPR2, JUP, NOSTRIN, SNAP25 and STX1A. Interacts with SLC7A9. Interacts with TGFBR1. Interacts with CAVIN3 (via leucine-zipper domain) in a cholesterol-sensitive manner. Interacts with CAVIN1. Interacts with EHD2 in a cholesterol-dependent manner. Forms a ternary complex with UBXN6 and VCP; mediates CAV1 targeting to lysosomes for degradation. Interacts with ABCG1; this interaction regulates ABCG1-mediated cholesterol efflux. Interacts with NEU3; this interaction enhances NEU3 sialidase activity within caveola. Interacts (via C-terminus) with SPRY1, SPRY2 (via C-terminus), SPRY3, and SPRY4. Post-translationally, phosphorylated at Tyr-14 by ABL1 in response to oxidative stress. In terms of processing, ubiquitinated. Undergo monoubiquitination and multi- and/or polyubiquitination. Monoubiquitination of N-terminal lysines promotes integration in a ternary complex with UBXN6 and VCP which promotes oligomeric CAV1 targeting to lysosomes for degradation. Ubiquitinated by ZNRF1; leading to degradation and modulation of the TLR4-mediated immune response.

The protein localises to the golgi apparatus membrane. The protein resides in the cell membrane. Its subcellular location is the membrane. It localises to the caveola. It is found in the membrane raft. Its function is as follows. May act as a scaffolding protein within caveolar membranes. Forms a stable heterooligomeric complex with CAV2 that targets to lipid rafts and drives caveolae formation. Mediates the recruitment of CAVIN proteins (CAVIN1/2/3/4) to the caveolae. Interacts directly with G-protein alpha subunits and can functionally regulate their activity. Involved in the costimulatory signal essential for T-cell receptor (TCR)-mediated T-cell activation. Its binding to DPP4 induces T-cell proliferation and NF-kappa-B activation in a T-cell receptor/CD3-dependent manner. Recruits CTNNB1 to caveolar membranes and may regulate CTNNB1-mediated signaling through the Wnt pathway. Negatively regulates TGFB1-mediated activation of SMAD2/3 by mediating the internalization of TGFBR1 from membrane rafts leading to its subsequent degradation. Binds 20(S)-hydroxycholesterol (20(S)-OHC). In Otolemur garnettii (Small-eared galago), this protein is Caveolin-1 (CAV1).